Here is a 157-residue protein sequence, read N- to C-terminus: 6,7-dimethyl-8-ribityllumazine synthase 1 (157 aa).

5-amino-6-(D-ribitylamino)uracil contacts are provided by residues Phe22, 53-55 (ALE), and 82-84 (TVI). Residue 87 to 88 (ET) coordinates (2S)-2-hydroxy-3-oxobutyl phosphate. The Proton donor role is filled by His90. Asn115 contributes to the 5-amino-6-(D-ribitylamino)uracil binding site. Arg129 provides a ligand contact to (2S)-2-hydroxy-3-oxobutyl phosphate.

The protein belongs to the DMRL synthase family.

It catalyses the reaction (2S)-2-hydroxy-3-oxobutyl phosphate + 5-amino-6-(D-ribitylamino)uracil = 6,7-dimethyl-8-(1-D-ribityl)lumazine + phosphate + 2 H2O + H(+). It functions in the pathway cofactor biosynthesis; riboflavin biosynthesis; riboflavin from 2-hydroxy-3-oxobutyl phosphate and 5-amino-6-(D-ribitylamino)uracil: step 1/2. Its function is as follows. Catalyzes the formation of 6,7-dimethyl-8-ribityllumazine by condensation of 5-amino-6-(D-ribitylamino)uracil with 3,4-dihydroxy-2-butanone 4-phosphate. This is the penultimate step in the biosynthesis of riboflavin. The protein is 6,7-dimethyl-8-ribityllumazine synthase 1 of Brucella suis biovar 1 (strain 1330).